A 207-amino-acid chain; its full sequence is Large ribosomal subunit protein uL3 (207 aa).

The interval 126 to 149 is disordered; that stretch reads GPASHGSKKWHRRPGSIGQRKTPG.

The protein belongs to the universal ribosomal protein uL3 family. Part of the 50S ribosomal subunit. Forms a cluster with proteins L14 and L19.

Its function is as follows. One of the primary rRNA binding proteins, it binds directly near the 3'-end of the 23S rRNA, where it nucleates assembly of the 50S subunit. The sequence is that of Large ribosomal subunit protein uL3 from Deinococcus geothermalis (strain DSM 11300 / CIP 105573 / AG-3a).